A 50-amino-acid polypeptide reads, in one-letter code: Large ribosomal subunit protein bL33A (50 aa).

It belongs to the bacterial ribosomal protein bL33 family.

In Mycoplasmopsis pulmonis (strain UAB CTIP) (Mycoplasma pulmonis), this protein is Large ribosomal subunit protein bL33A (rpmG1).